The sequence spans 179 residues: Ribosome-recycling factor (179 aa).

The protein belongs to the RRF family.

It localises to the cytoplasm. In terms of biological role, responsible for the release of ribosomes from messenger RNA at the termination of protein biosynthesis. May increase the efficiency of translation by recycling ribosomes from one round of translation to another. The chain is Ribosome-recycling factor from Chlamydia trachomatis serovar D (strain ATCC VR-885 / DSM 19411 / UW-3/Cx).